A 101-amino-acid chain; its full sequence is Ferredoxin Fdx2 (101 aa).

4Fe-4S ferredoxin-type domains are found at residues 1–29 and 31–64; these read MATY…EGDE and YVID…PNPQ. Positions 9, 12, 15, 19, 38, 41, 50, and 54 each coordinate [4Fe-4S] cluster.

[4Fe-4S] cluster is required as a cofactor.

Its function is as follows. Ferredoxins are iron-sulfur proteins that transfer electrons in a wide variety of metabolic reactions. Fdx2 can receive electrons from both FdR_A and FdR_B ferredoxin reductases, with a preference for FdR_B compared with FdR_A, and transfer the electrons to the cytochrome P450 CYP260A1. This Sorangium cellulosum (strain So ce56) (Polyangium cellulosum (strain So ce56)) protein is Ferredoxin Fdx2.